A 217-amino-acid polypeptide reads, in one-letter code: uncharacterized protein (217 aa).

This is an uncharacterized protein from Escherichia coli.